Reading from the N-terminus, the 683-residue chain is Amphiphysin (683 aa).

2 coiled-coil regions span residues 10 to 83 and 144 to 191; these read AKNV…SLHE and DYDS…QEEL. Positions 24-240 constitute a BAR domain; that stretch reads VLQKLGKADE…MTKLGDQHAD (217 aa). Disordered regions lie at residues 244 to 311, 421 to 443, and 455 to 599; these read SIQG…KVTP, AETE…AAAP, and EPKE…ASLS. Residue Ser-252 is modified to Phosphoserine. The residue at position 260 (Thr-260) is a Phosphothreonine. Over residues 261–274 the composition is skewed to pro residues; that stretch reads PSPPEEASPLPSPT. Phosphoserine is present on residues Ser-262, Ser-268, Ser-272, and Ser-276. At Thr-280 the chain carries Phosphothreonine. Composition is skewed to low complexity over residues 424-443 and 468-477; these read EQAL…AAAP and AGETVGTEGS. At Ser-496 the chain carries Phosphoserine. The span at 539–559 shows a compositional bias: basic and acidic residues; that stretch reads SNHEGEEHQETTTGTETREAT. The span at 585–596 shows a compositional bias: low complexity; it reads AATPAPAGAVDA. The SH3 domain maps to 610–683; the sequence is GFLYKVETLH…FPENFTRHLE (74 aa). Ser-626 is subject to Phosphoserine.

In terms of assembly, heterodimer with BIN1. Binds SH3GLB1. Interacts with REPS1 and SGIP1. Binds AP2A2. Interacts with AP2B1. Interacts with DNM1 and SYNJ1.

Its subcellular location is the cytoplasmic vesicle. It localises to the secretory vesicle. The protein localises to the synaptic vesicle membrane. It is found in the cytoplasm. The protein resides in the cytoskeleton. Functionally, may participate in mechanisms of regulated exocytosis in synapses and certain endocrine cell types. May control the properties of the membrane associated cytoskeleton. The protein is Amphiphysin (Amph) of Rattus norvegicus (Rat).